The following is a 108-amino-acid chain: Large ribosomal subunit protein bL21 (108 aa).

It belongs to the bacterial ribosomal protein bL21 family. As to quaternary structure, part of the 50S ribosomal subunit. Contacts protein L20.

This protein binds to 23S rRNA in the presence of protein L20. This is Large ribosomal subunit protein bL21 from Acidobacterium capsulatum (strain ATCC 51196 / DSM 11244 / BCRC 80197 / JCM 7670 / NBRC 15755 / NCIMB 13165 / 161).